The sequence spans 550 residues: Chaperonin GroEL (550 aa).

Residues 30–33 (TLGP), Lys51, 87–91 (DGTTT), Gly415, and Asp496 each bind ATP.

Belongs to the chaperonin (HSP60) family. In terms of assembly, forms a cylinder of 14 subunits composed of two heptameric rings stacked back-to-back. Interacts with the co-chaperonin GroES.

The protein localises to the cytoplasm. The enzyme catalyses ATP + H2O + a folded polypeptide = ADP + phosphate + an unfolded polypeptide.. Functionally, together with its co-chaperonin GroES, plays an essential role in assisting protein folding. The GroEL-GroES system forms a nano-cage that allows encapsulation of the non-native substrate proteins and provides a physical environment optimized to promote and accelerate protein folding. The sequence is that of Chaperonin GroEL from Rickettsia bellii (strain OSU 85-389).